We begin with the raw amino-acid sequence, 198 residues long: ATP-dependent Clp protease proteolytic subunit (198 aa).

Catalysis depends on serine 101, which acts as the Nucleophile. Histidine 126 is a catalytic residue.

Belongs to the peptidase S14 family. As to quaternary structure, component of the chloroplastic Clp protease core complex.

It localises to the plastid. The protein localises to the chloroplast stroma. It catalyses the reaction Hydrolysis of proteins to small peptides in the presence of ATP and magnesium. alpha-casein is the usual test substrate. In the absence of ATP, only oligopeptides shorter than five residues are hydrolyzed (such as succinyl-Leu-Tyr-|-NHMec, and Leu-Tyr-Leu-|-Tyr-Trp, in which cleavage of the -Tyr-|-Leu- and -Tyr-|-Trp bonds also occurs).. In terms of biological role, cleaves peptides in various proteins in a process that requires ATP hydrolysis. Has a chymotrypsin-like activity. Plays a major role in the degradation of misfolded proteins. The polypeptide is ATP-dependent Clp protease proteolytic subunit (Psilotum nudum (Whisk fern)).